Here is a 330-residue protein sequence, read N- to C-terminus: Aspartate--ammonia ligase (330 aa).

This sequence belongs to the class-II aminoacyl-tRNA synthetase family. AsnA subfamily.

Its subcellular location is the cytoplasm. It carries out the reaction L-aspartate + NH4(+) + ATP = L-asparagine + AMP + diphosphate + H(+). It participates in amino-acid biosynthesis; L-asparagine biosynthesis; L-asparagine from L-aspartate (ammonia route): step 1/1. The chain is Aspartate--ammonia ligase from Photorhabdus laumondii subsp. laumondii (strain DSM 15139 / CIP 105565 / TT01) (Photorhabdus luminescens subsp. laumondii).